A 213-amino-acid polypeptide reads, in one-letter code: Nickel-cobalt-cadmium resistance protein NccN (213 aa).

4 consecutive transmembrane segments (helical) span residues 24–44, 48–68, 113–133, and 180–200; these read IGIW…GHSQ, TWIS…ATVG, ESIT…PAVI, and NLAD…VELA.

This sequence to A.eutrophus CzcN.

It is found in the cell inner membrane. Functionally, component of the NCC cation-efflux system that confers resistance to nickel, cobalt and cadmium. Appears to be involved in metal specificity but affects only nickel resistance. May be involved in nickel transport. This chain is Nickel-cobalt-cadmium resistance protein NccN (nccN), found in Alcaligenes xylosoxydans xylosoxydans (Achromobacter xylosoxidans).